The primary structure comprises 686 residues: Amphiphysin (686 aa).

2 coiled-coil regions span residues 10–83 (AKNV…SLHE) and 144–191 (DYDS…QEEL). One can recognise a BAR domain in the interval 24–240 (VLQKLGKADE…MTKLGDQHAD (217 aa)). Disordered stretches follow at residues 244–314 (SIQG…PTKE), 421–441 (AETE…ATAA), and 483–597 (VEEA…AGAV). Position 252 is a phosphoserine (Ser252). Thr260 carries the post-translational modification Phosphothreonine. The segment covering 261–274 (PSPPEEPSPLPSPT) has biased composition (pro residues). Residues Ser262, Ser268, Ser272, and Ser276 each carry the phosphoserine modification. Position 280 is a phosphothreonine (Thr280). Over residues 424–441 (EQALPTEPQAEEPPATAA) the composition is skewed to low complexity. Ser500 carries the post-translational modification Phosphoserine. Over residues 541–562 (SNHEGEGEHQETATGTEPREAA) the composition is skewed to basic and acidic residues. One can recognise an SH3 domain in the interval 613 to 686 (GFLYKVETLH…FPENFTRRLE (74 aa)). Ser629 carries the post-translational modification Phosphoserine.

As to quaternary structure, heterodimer with BIN1. Binds SH3GLB1. Interacts with REPS1 and SGIP1. Binds AP2A2. Interacts with AP2B1. Interacts with DNM1 and SYNJ1.

It localises to the cytoplasmic vesicle. The protein localises to the secretory vesicle. The protein resides in the synaptic vesicle membrane. It is found in the cytoplasm. Its subcellular location is the cytoskeleton. Its function is as follows. May participate in mechanisms of regulated exocytosis in synapses and certain endocrine cell types. May control the properties of the membrane associated cytoskeleton. This chain is Amphiphysin (Amph), found in Mus musculus (Mouse).